The primary structure comprises 321 residues: Ribonuclease Z (321 aa).

Residues histidine 62, histidine 64, aspartate 66, histidine 67, histidine 139, aspartate 209, and histidine 268 each coordinate Zn(2+). Catalysis depends on aspartate 66, which acts as the Proton acceptor.

Belongs to the RNase Z family. As to quaternary structure, homodimer. The cofactor is Zn(2+).

The enzyme catalyses Endonucleolytic cleavage of RNA, removing extra 3' nucleotides from tRNA precursor, generating 3' termini of tRNAs. A 3'-hydroxy group is left at the tRNA terminus and a 5'-phosphoryl group is left at the trailer molecule.. Zinc phosphodiesterase, which displays some tRNA 3'-processing endonuclease activity. Probably involved in tRNA maturation, by removing a 3'-trailer from precursor tRNA. The polypeptide is Ribonuclease Z (Pseudomonas putida (strain W619)).